We begin with the raw amino-acid sequence, 230 residues long: Oxaloacetate tautomerase FAHD1, mitochondrial (230 aa).

The transit peptide at 1–26 (MAAAAAAAAQRLLAASTKIIGVGRNY) directs the protein to the mitochondrion. Residues glutamate 73, glutamate 75, and aspartate 104 each coordinate Mg(2+).

The protein belongs to the FAH family. The cofactor is Mg(2+). Requires Mn(2+) as cofactor.

The protein resides in the mitochondrion. It carries out the reaction oxaloacetate = enol-oxaloacetate. Its function is as follows. Tautomerase that converts enol-oxaloacetate, a strong inhibitor of succinate dehydrogenase, to the physiological keto form of oxaloacetate. The polypeptide is Oxaloacetate tautomerase FAHD1, mitochondrial (Oryza sativa subsp. japonica (Rice)).